Here is a 411-residue protein sequence, read N- to C-terminus: Transforming growth factor beta regulator 1 (411 aa).

Disordered stretches follow at residues 1-29 and 119-146; these read MSLLDGLASSPRAPLQSSKARMKKLPKKS and GPISGPSTGAEEPFGKKTKKEKKEKGKE. An N-acetylserine modification is found at S2. S10 carries the phosphoserine modification. The 60-residue stretch at 182–241 folds into the FYR N-terminal domain; that stretch reads VFPIGLGGLTVYSLGEIITDRPGFHDESAIYPVGYCSTRIYASMKCPDQKCLYTCQIKDG. The FYR C-terminal domain occupies 242–321; it reads GVQPQFEIVP…RKCINYQWVK (80 aa).

This sequence belongs to the TBRG1 family. In terms of assembly, interacts with CDKN2A and MDM2. Post-translationally, ubiquitinated; mediated by MDM2 and leading to its subsequent proteasomal degradation. In terms of tissue distribution, widely expressed at low levels in most tissues, with highest levels in pancreas, lung and liver. Expression is decreased in primary tumors including lung, liver, breast, pancreas and kidney carcinomas, chronic lymphocytic leukemia and diffuse large B-cell lymphoma.

It is found in the nucleus. In terms of biological role, acts as a growth inhibitor. Can activate p53/TP53, causes G1 arrest and collaborates with CDKN2A to restrict proliferation, but does not require either protein to inhibit DNA synthesis. Redistributes CDKN2A into the nucleoplasm. Involved in maintaining chromosomal stability. This chain is Transforming growth factor beta regulator 1 (TBRG1), found in Homo sapiens (Human).